A 750-amino-acid polypeptide reads, in one-letter code: MSGNHTPSASGPFSALTPSIWPQEILAKYSQKEESSEQPELCYDEFGFRVDKEGSEPGCSQMTGSPLVEDPPQRLRWQAHLEFTHNHDVGDLTWDKIAVSLPRSEKLRSLVLAGIPHGMRPQLWMRLSGALQKKKNSELSYREIIKNSSNDETIAAKQIEKDLLRTMPSNACFANVNSIGVPRLRRVLRALAWLYPEIGYCQGTGMVAACLLLFLEEEDAFWMMCAIIEDLLPASYFSTTLLGVQTDQRVLRHLIVQYLPRLDKLLQEHDIELSLITLHWFLTAFASVVHIRLLLRIWDLFFYEGSLVLFQTTLGMLRLKEEELIQSENSASIFNTLSDIPAQMDDAELLLGEAMRLAGSLTDVAVETQRRKHLAYLIADQGQTLGTGTTTNLSQVVRRRTQRRKSGITSLLFGEDDLEALKAKNIKQTELVADLREAILRVARHFQCTDPKNCSVELTPDYSMESHQRDHENYVACLRSHRRRAKALLDFERHDDDELGFRKNDIITIISQKDEHCWVGELNGLRGWFPAKFVEVLDERSKEYSIAGDDSVTEGVTDLVRGTLCPALKALFEHGLKKPSLLGGACHPWLFIEEAAGREVERDFDSVYSRLVLCKTYRLDEDGKVLTPEELLYRAVQSVNVTHDAAHAQMDVKLRSLICVGLNEQVLHLWLEVLCSSLPTVEKWYQPWSFLRSPGWVQIKCELRVLCCFAFSLSQDWELPARREEEKQPLKEGVQDMLVKHHLFSWDIDG.

The 192-residue stretch at G114–G305 folds into the Rab-GAP TBC domain. S406 carries the phosphoserine modification. Residues E415 to I439 are a coiled coil. The SH3 domain maps to S480–E539. The region spanning G555 to E718 is the RUN domain.

This sequence belongs to the small G protein signaling modulator family. Interacts with GJA1. Interaction with GJA1 induces its degradation. Interacts via its RUN domain with the C-terminal region of NF2. Interacts with RAB3A, RAB4A, RAB5A, RAB8A, RAB11A, RAP1A, RAP1B, RAP2A, RAP2B and PDCD6I. No interaction with RAB27A. Widely expressed.

It localises to the cytoplasm. Functionally, may play a cooperative role in NF2-mediated growth suppression of cells. The protein is Small G protein signaling modulator 3 of Mus musculus (Mouse).